We begin with the raw amino-acid sequence, 597 residues long: Sodium/mannose cotransporter SLC5A10 (597 aa).

Over 1 to 16 (MAVDNSTSDAHTPGRQ) the chain is Extracellular. The N-linked (GlcNAc...) asparagine glycan is linked to asparagine 5. Residues 17 to 37 (LTVVDIAIIAVYFALNVAVGI) form a helical membrane-spanning segment. The Cytoplasmic segment spans residues 38–73 (WSSCRASRNTVRGYFLAGRDMTWWPIGASLFASSEG). Residues 74–94 (SGLFIGLAGSGAAGGLAVAGF) form a helical membrane-spanning segment. Over 95–100 (EWNATY) the chain is Extracellular. N-linked (GlcNAc...) asparagine glycosylation is present at asparagine 97. Residues 101-121 (VLLALAWVFVPIYLSSEIVTM) traverse the membrane as a helical segment. At 122-139 (PEYMQKRYGGQRIRMYLS) the chain is on the cytoplasmic side. Residues 140–162 (VLSLLLSVFTKISIDLYAGALFV) form a helical membrane-spanning segment. Over 163 to 174 (HICLGWNFYLST) the chain is Extracellular. The helical transmembrane segment at 175 to 195 (VIMLAITALYTIAGGLTAVIY) threads the bilayer. Residues 196–201 (TDALQT) are Cytoplasmic-facing. The helical transmembrane segment at 202–222 (LVMVAGAVILTIKAFEQIGGY) threads the bilayer. The Extracellular segment spans residues 223–265 (EQLAEAYAQAVPSRTISNTTCHVPRADAMHMFRDPYTADLPWT). Residues 266-286 (GMTFGLTIMAAWYWCTDQVIV) traverse the membrane as a helical segment. The Cytoplasmic portion of the chain corresponds to 287-301 (QRSLSARDLNHAKGG). The helical transmembrane segment at 302–322 (SILASYLKMLPMGLMVMPGMI) threads the bilayer. Over 323-367 (SRVLFPDDVGCVVPAECLRACGAEIGCSNIAYPKLVMELMPTGLR) the chain is Extracellular. The chain crosses the membrane as a helical span at residues 368 to 388 (GLMVAVMMAALMSSLTSIFNS). The Cytoplasmic portion of the chain corresponds to 389–410 (SSTLFTMDIWRRLRPRAGEREL). A helical transmembrane segment spans residues 411–431 (LLVGRLVIVVLVGVSVAWIPV). The Extracellular portion of the chain corresponds to 432–444 (LQGSNGGQLFIYM). A helical membrane pass occupies residues 445 to 465 (QSVTSSLAPPVTAVFVLGIFW). The Cytoplasmic portion of the chain corresponds to 466–472 (RRANEQG). The helical transmembrane segment at 473–493 (AFWGLMAGLAVGATRLVLEFL) threads the bilayer. Residues 494–514 (HPAPPCGHPDTRPPILHGVHY) lie on the Extracellular side of the membrane. The chain crosses the membrane as a helical span at residues 515-535 (LHFAVALFLLSGAVVVAGSLL). The Cytoplasmic portion of the chain corresponds to 536–576 (TPHPQGVQIQSLTWWTLAQDLPLGVKTGDGRASQRHAFWAR). A helical transmembrane segment spans residues 577–597 (VCGVNAILLMCVNIFFYTYFA).

The protein belongs to the sodium:solute symporter (SSF) (TC 2.A.21) family. In terms of tissue distribution, predominantyl expressed in kidney. Also detected at very low levels in testes, skeletal muscle, and spleen.

It is found in the apical cell membrane. It catalyses the reaction D-mannose(out) + Na(+)(out) = D-mannose(in) + Na(+)(in). The enzyme catalyses D-fructopyranose(out) + Na(+)(out) = D-fructopyranose(in) + Na(+)(in). Functionally, electrogenic Na+-coupled sugar symporter that actively transports D-mannose or D-fructose at the plasma membrane, with a Na+ to sugar coupling ratio of 1:1. Transporter activity is driven by a transmembrane Na+ electrochemical gradient set by the Na+/K+ pump. Exclusively recognizes sugar substrates having a pyranose ring with an axial hydroxyl group on carbon 2. Has likely evolved to enable renal reabsorption of D-mannose, an important constituent of oligosaccharide chains of glycoproteins. Contributes to dietary D-fructose reabsorption from glomerular filtrate across the brush border of the kidney. The polypeptide is Sodium/mannose cotransporter SLC5A10 (SLC5A10) (Bos taurus (Bovine)).